The sequence spans 165 residues: Large ribosomal subunit protein uL15 (165 aa).

A disordered region spans residues 1 to 44 (MSLNQLKAPRGANRAKKRVGRGQGSGLGKTAGRGGKGQKARSGN). Residues 21 to 37 (RGQGSGLGKTAGRGGKG) are compositionally biased toward gly residues.

It belongs to the universal ribosomal protein uL15 family. In terms of assembly, part of the 50S ribosomal subunit.

Binds to the 23S rRNA. This Anaeromyxobacter dehalogenans (strain 2CP-C) protein is Large ribosomal subunit protein uL15.